Consider the following 387-residue polypeptide: Polyadenylate-binding protein RBP45A (387 aa).

3 consecutive RRM domains span residues 60–140 (KSLW…WAQA), 154–233 (HTIF…PAAN), and 260–332 (TTIF…WGRS). The segment covering 329–342 (WGRSPNKQSDQAQW) has biased composition (polar residues). A disordered region spans residues 329-387 (WGRSPNKQSDQAQWNGGGYYGYPPQPQGGYGYAAQPPTQDPNAYYGGYTGYGNYQQQRQ).

This sequence belongs to the polyadenylate-binding RBP45 family. As to quaternary structure, interacts with the poly(A) tail of mRNA in nucleus. As to expression, mostly expressed in seedlings, and, to a lower extent, in leaves, stems, and flowers. Present in immature anther tissues (tapetum cells) and mature pollen grains.

It localises to the nucleus. Its function is as follows. Heterogeneous nuclear ribonucleoprotein (hnRNP)-protein binding the poly(A) tail of mRNA and probably involved in some steps of pre-mRNA maturation. This Arabidopsis thaliana (Mouse-ear cress) protein is Polyadenylate-binding protein RBP45A (RBP45A).